Here is a 477-residue protein sequence, read N- to C-terminus: Zinc finger C3HC-type protein 1-like (477 aa).

A C3HC-type zinc finger spans residues 95–149 (CAKYGWCNIECDMLKCSSCNAYLCASLQPILDFSKYKQRCVELQEALRKAHEKFC). The interval 287 to 392 (SLSAPGTPVS…SSSSDTSPRS (106 aa)) is disordered. Residues 354–363 (SMGQGENTGL) are compositionally biased toward polar residues. Positions 370 to 379 (SPHRRAKRPR) are enriched in basic residues. Over residues 382-392 (SSSSSDTSPRS) the composition is skewed to low complexity.

Post-translationally, phosphorylated. May also be weakly phosphorylated on Tyr residues.

The protein resides in the nucleus. The protein localises to the nucleus envelope. In terms of biological role, required for proper positioning of a substantial amount of TPR at the nuclear basket (NB) through interaction with TPR. This Xenopus laevis (African clawed frog) protein is Zinc finger C3HC-type protein 1-like (zc3hc1).